The following is a 309-amino-acid chain: Homoserine O-succinyltransferase (309 aa).

Cys142 serves as the catalytic Acyl-thioester intermediate. The substrate site is built by Lys163 and Ser192. His235 serves as the catalytic Proton acceptor. Glu237 is a catalytic residue. Arg249 is a binding site for substrate.

This sequence belongs to the MetA family.

The protein localises to the cytoplasm. The catalysed reaction is L-homoserine + succinyl-CoA = O-succinyl-L-homoserine + CoA. The protein operates within amino-acid biosynthesis; L-methionine biosynthesis via de novo pathway; O-succinyl-L-homoserine from L-homoserine: step 1/1. In terms of biological role, transfers a succinyl group from succinyl-CoA to L-homoserine, forming succinyl-L-homoserine. The chain is Homoserine O-succinyltransferase from Yersinia pseudotuberculosis serotype O:1b (strain IP 31758).